Reading from the N-terminus, the 413-residue chain is tRNA (guanine-N(7)-)-methyltransferase non-catalytic subunit WDR4 (413 aa).

Residue A2 is modified to N-acetylalanine. WD repeat units lie at residues 61–100 (TGSD…CLSV), 102–141 (MVVR…GCGR), 145–185 (GHLS…IESF), 188–228 (GHTE…QLQC), and 289–329 (TFPH…WQAA). The disordered stretch occupies residues 380–413 (RLQQQLKKKRQRSPFPGSPEQTKKACPGQSALSC). A phosphoserine mark is found at S392 and S412.

It belongs to the WD repeat TRM82 family. In terms of assembly, non-catalytic component of the METTL1-WDR4 complex, composed of METTL1 and WDR4. Interacts with FEN1; the interaction is direct.

The protein resides in the nucleus. Its subcellular location is the chromosome. It participates in tRNA modification; N(7)-methylguanine-tRNA biosynthesis. Its function is as follows. Non-catalytic component of the METTL1-WDR4 methyltransferase complex required for the formation of N(7)-methylguanine in a subset of RNA species, such as tRNAs, mRNAs and microRNAs (miRNAs). In the METTL1-WDR4 methyltransferase complex, WDR4 acts as a scaffold for tRNA-binding. Required for the formation of N(7)-methylguanine at position 46 (m7G46) in a large subset of tRNAs that contain the 5'-RAGGU-3' motif within the variable loop. M7G46 interacts with C13-G22 in the D-loop to stabilize tRNA tertiary structure and protect tRNAs from decay. Also required for the formation of N(7)-methylguanine at internal sites in a subset of mRNAs. Also required for methylation of a specific subset of miRNAs, such as let-7. Acts as a regulator of embryonic stem cell self-renewal and differentiation. Independently of METTL1, also plays a role in genome stability: localizes at the DNA replication site and regulates endonucleolytic activities of FEN1. The polypeptide is tRNA (guanine-N(7)-)-methyltransferase non-catalytic subunit WDR4 (Mus musculus (Mouse)).